A 334-amino-acid chain; its full sequence is Glyceraldehyde-3-phosphate dehydrogenase (334 aa).

NAD(+) is bound by residues Thr12–Ile13 and Gly111. Residue Ser140–Asn142 coordinates D-glyceraldehyde 3-phosphate. Cys141 acts as the Nucleophile in catalysis. Arg167 serves as a coordination point for NAD(+). Residue His192 to Gly193 participates in D-glyceraldehyde 3-phosphate binding. Residue Gln298 coordinates NAD(+).

This sequence belongs to the glyceraldehyde-3-phosphate dehydrogenase family. As to quaternary structure, homotetramer.

The protein resides in the cytoplasm. It carries out the reaction D-glyceraldehyde 3-phosphate + phosphate + NADP(+) = (2R)-3-phospho-glyceroyl phosphate + NADPH + H(+). It catalyses the reaction D-glyceraldehyde 3-phosphate + phosphate + NAD(+) = (2R)-3-phospho-glyceroyl phosphate + NADH + H(+). It participates in carbohydrate degradation; glycolysis; pyruvate from D-glyceraldehyde 3-phosphate: step 1/5. The chain is Glyceraldehyde-3-phosphate dehydrogenase (gap) from Pyrococcus abyssi (strain GE5 / Orsay).